The sequence spans 191 residues: Ureidoglycolate lyase (191 aa).

Belongs to the ureidoglycolate lyase family. As to quaternary structure, homodimer.

The enzyme catalyses (S)-ureidoglycolate = urea + glyoxylate. The protein operates within nitrogen metabolism; (S)-allantoin degradation. Its function is as follows. Catalyzes the catabolism of the allantoin degradation intermediate (S)-ureidoglycolate, generating urea and glyoxylate. Involved in the utilization of allantoin as secondary nitrogen source when primary sources are limiting. This Schizosaccharomyces pombe (strain 972 / ATCC 24843) (Fission yeast) protein is Ureidoglycolate lyase.